The following is a 111-amino-acid chain: Phosphoribosyl-ATP pyrophosphatase (111 aa).

It belongs to the PRA-PH family.

The protein resides in the cytoplasm. It catalyses the reaction 1-(5-phospho-beta-D-ribosyl)-ATP + H2O = 1-(5-phospho-beta-D-ribosyl)-5'-AMP + diphosphate + H(+). The protein operates within amino-acid biosynthesis; L-histidine biosynthesis; L-histidine from 5-phospho-alpha-D-ribose 1-diphosphate: step 2/9. The polypeptide is Phosphoribosyl-ATP pyrophosphatase (Pseudomonas putida (strain ATCC 700007 / DSM 6899 / JCM 31910 / BCRC 17059 / LMG 24140 / F1)).